The chain runs to 88 residues: Putative cancer susceptibility gene HEPN1 protein (88 aa).

Expressed in liver. Expression is either down-regulated or lost in hepatocellular carcinomas (HCC).

Its subcellular location is the cytoplasm. This is Putative cancer susceptibility gene HEPN1 protein (HEPN1) from Homo sapiens (Human).